A 621-amino-acid polypeptide reads, in one-letter code: MIEKLTFGLFKKEDARSFMRLMAYVRPYKIRIVAALIAIFGVAATESYLAAFIAPLINHGFSAPAAPPELSAAAGIISTLQNWREQFTYMVWGTENKIWTVPLFLIILVVIRGICRFTSTYLMTWVSVMTISKIRKDMFAKMLTLSSRYHQETPSGTVLMNMLNLTEQSVSNASDIFTVLTRDTMIVTGLTIVLLYLNWQLSLIVVLMFPLLSLLSRYYRDRLKHVISDSQKSIGTMNNVIAETHQGHRVVKLFNGQAQAANRFDAVNRTIVRLSKKITQATAAHSPFSELIASIALAVVIFIALWQSQNGYTTIGEFMAFIVAMLQMYAPIKSLANISIPMQTMFLAADGVCAFLDTPPEQDKGTLAPQRVEGRISFRNVDVEYRSDGIKALDNFNLDIRQGERVALVGRSGSGKSTVVNLLPRFVEPSAGNICIDGIDIADIKLDCLRAQFALVSQDVFLFDDTLFENVRYSRPDAGEAEVLFALQTANLQSLIDSSPLGLHQPIGSNGSNLSGGQRQRVAIARAILKDAPILLLDEATSALDNESERLVQQALERLMENRTGIIVAHRLTTIEGADRIIVMDDGKIIEQGTHEQLMSQNGYYTMLRNISNKDAAVRTA.

5 consecutive transmembrane segments (helical) span residues 32 to 52 (IVAA…LAAF), 91 to 111 (VWGT…LVVI), 192 to 212 (IVLL…FPLL), 286 to 306 (SPFS…IALW), and 312 to 332 (YTTI…YAPI). One can recognise an ABC transmembrane type-1 domain in the interval 33–344 (VAALIAIFGV…LANISIPMQT (312 aa)). In terms of domain architecture, ABC transporter spans 378 to 611 (FRNVDVEYRS…NGYYTMLRNI (234 aa)). 410 to 417 (GRSGSGKS) lines the ATP pocket.

The protein belongs to the ABC transporter superfamily. Lipid exporter (TC 3.A.1.106) family. Homodimer.

It localises to the cell inner membrane. The catalysed reaction is ATP + H2O + lipid A-core oligosaccharideSide 1 = ADP + phosphate + lipid A-core oligosaccharideSide 2.. Its function is as follows. Involved in lipopolysaccharide (LPS) biosynthesis. Translocates lipid A-core from the inner to the outer leaflet of the inner membrane. Transmembrane domains (TMD) form a pore in the inner membrane and the ATP-binding domain (NBD) is responsible for energy generation. The sequence is that of ATP-dependent lipid A-core flippase from Neisseria meningitidis serogroup B (strain ATCC BAA-335 / MC58).